Reading from the N-terminus, the 765-residue chain is Transcription factor RFX3 (765 aa).

The RFX-type winged-helix DNA-binding region spans 189–264; sequence HLQWLLDNYE…YHYYGIRVKP (76 aa).

Belongs to the RFX family.

It localises to the nucleus. In terms of biological role, transcription factor required for ciliogenesis and islet cell differentiation during endocrine pancreas development. The chain is Transcription factor RFX3 (rfx3) from Danio rerio (Zebrafish).